Reading from the N-terminus, the 840-residue chain is Cullin-4 (840 aa).

A compositionally biased stretch (polar residues) spans 1–11 (MTSGAPPTIST). A disordered region spans residues 1 to 82 (MTSGAPPTIS…TGNSSRTTAT (82 aa)). Residues 33–48 (TEAKQMRGDTENRSDG) show a composition bias toward basic and acidic residues. The span at 69–82 (FRSQTGNSSRTTAT) shows a compositional bias: polar residues. In terms of domain architecture, Cullin neddylation spans 772–831 (DRQYKIDAAVVRIMKARKQLNHQTLMTELLQQLRFPVSTADIKKRLESLIEREYISRDPE). Lys-786 is covalently cross-linked (Glycyl lysine isopeptide (Lys-Gly) (interchain with G-Cter in NEDD8)).

Belongs to the cullin family. As to quaternary structure, part of an E3 ubiquitin-protein ligase complex including cul-4 and ddb-1. In terms of processing, neddylated. Deneddylated via its interaction with the COP9 signalosome (CSN) complex.

It participates in protein modification; protein ubiquitination. Component of cullin-based E3 ubiquitin-protein ligase complexes which mediate the ubiquitination and subsequent proteasomal degradation of target proteins. The functional specificity of the E3 ubiquitin-protein ligase complex depends on the variable substrate recognition component. In association with ddb-1 directs ubiquitination of cdt-1 during S phase and is required for restraining DNA rereplication. Probably is involved in ubiquitination of cki-1. The sequence is that of Cullin-4 (cul-4) from Caenorhabditis elegans.